We begin with the raw amino-acid sequence, 69 residues long: Cold shock protein CapB (69 aa).

The CSD domain occupies 7–66; sequence GTVKWFNDEKGFGFITPQSGDDLFVHFKAIQSDGFKSLKEGQQVSFIATRGQKGMQAEEV.

The protein resides in the cytoplasm. Its function is as follows. Affects cell viability at low temperatures. This Pseudomonas fragi protein is Cold shock protein CapB (capB).